The primary structure comprises 52 residues: Large ribosomal subunit protein eL39 (52 aa).

Belongs to the eukaryotic ribosomal protein eL39 family.

The chain is Large ribosomal subunit protein eL39 from Caldivirga maquilingensis (strain ATCC 700844 / DSM 13496 / JCM 10307 / IC-167).